Consider the following 70-residue polypeptide: Bowman-Birk type proteinase inhibitor A7 (70 aa).

Intrachain disulfides connect Cys12-Cys31, Cys18-Cys29, Cys38-Cys45, and Cys42-Cys59.

It belongs to the Bowman-Birk serine protease inhibitor family. As to expression, expressed in bulb (at protein level).

Functionally, serine protease inhibitor. Strongly inhibits trypsin (Ki = 7.1 nM) and almost completely inhibits elastase. Also inhibits chymotrypsin (Ki = 19 nM). Does not inhibit bacterial subtilisin. In Hyacinthus orientalis (Common hyacinth), this protein is Bowman-Birk type proteinase inhibitor A7.